The following is a 362-amino-acid chain: 3-dehydroquinate synthase (362 aa).

NAD(+) is bound by residues Asp71 to Lys76, Gly105 to Asp109, Thr129 to Thr130, Lys142, Lys151, and Cys169 to Thr172. Glu184, His247, and His264 together coordinate Zn(2+).

Belongs to the sugar phosphate cyclases superfamily. Dehydroquinate synthase family. NAD(+) is required as a cofactor. Co(2+) serves as cofactor. It depends on Zn(2+) as a cofactor.

It localises to the cytoplasm. It catalyses the reaction 7-phospho-2-dehydro-3-deoxy-D-arabino-heptonate = 3-dehydroquinate + phosphate. It participates in metabolic intermediate biosynthesis; chorismate biosynthesis; chorismate from D-erythrose 4-phosphate and phosphoenolpyruvate: step 2/7. Catalyzes the conversion of 3-deoxy-D-arabino-heptulosonate 7-phosphate (DAHP) to dehydroquinate (DHQ). This is 3-dehydroquinate synthase from Escherichia coli O157:H7.